A 187-amino-acid chain; its full sequence is UPF0301 protein Pcryo_0062 (187 aa).

The protein belongs to the UPF0301 (AlgH) family.

The polypeptide is UPF0301 protein Pcryo_0062 (Psychrobacter cryohalolentis (strain ATCC BAA-1226 / DSM 17306 / VKM B-2378 / K5)).